The sequence spans 202 residues: Sperm-specific H1/protamine-like protein type 1 (202 aa).

A compositionally biased stretch (basic residues) spans 1-35; that stretch reads MPSPSRKSRSRSRSRSKSPKRSPAKKARKTPKKPR. Disordered stretches follow at residues 1–46 and 104–202; these read MPSP…PTTL and KTSA…QFAL. In terms of domain architecture, H15 spans 41-120; the sequence is KKPTTLSMIV…GATGSFRVGK (80 aa). Positions 126–156 are enriched in basic residues; that stretch reads KKAKKAKSPKKKSSKKSKNKSNNAKAKKSPK. A compositionally biased stretch (low complexity) spans 177–187; that stretch reads GARYPFRYQAY.

In terms of processing, OE1 and OE3 are produced by post-translational cleavage of a common precursor. Sperm.

The protein resides in the nucleus. It localises to the chromosome. Its function is as follows. Linker histones are implicated in chromatin remodeling and/or transcriptional regulation during spermiogenesis, the process of spermatid maturation into spermatozoa. Protamines substitute for histones in the chromatin of sperm during the haploid phase of spermatogenesis. They compact sperm DNA into a highly condensed, stable and inactive complex. This is Sperm-specific H1/protamine-like protein type 1 from Ostrea edulis (Native oyster).